A 59-amino-acid chain; its full sequence is uncharacterized protein (59 aa).

This is an uncharacterized protein from Dictyostelium discoideum (Social amoeba).